The following is a 27-amino-acid chain: Dermaseptin-S4 (27 aa).

The protein belongs to the frog skin active peptide (FSAP) family. Dermaseptin subfamily. Monomer and oligomer. Forms aggregates in aqueous environments. In terms of tissue distribution, expressed by the skin glands.

Its subcellular location is the secreted. Functionally, potent antimicrobial peptide with activity against bacteria and protozoa. Also has activity against fungi. Also shows activity against enveloped herpes simplex virus type 1. Probably acts by disturbing membrane functions with its amphipathic structure. Binds to healthy erythrocytes (this binding is receptor independent), and has strong hemolytic activity. Does not bind to P.falciparum infected erythrocytes, but accumulates within the parasite. Kills the parasite, and only at high concentrations has a hemolytic activity on the host cell. In vitro, shows high spermicidal activities. The sequence is that of Dermaseptin-S4 from Phyllomedusa sauvagei (Sauvage's leaf frog).